A 178-amino-acid polypeptide reads, in one-letter code: Large ribosomal subunit protein uL6 (178 aa).

This sequence belongs to the universal ribosomal protein uL6 family. As to quaternary structure, part of the 50S ribosomal subunit.

This protein binds to the 23S rRNA, and is important in its secondary structure. It is located near the subunit interface in the base of the L7/L12 stalk, and near the tRNA binding site of the peptidyltransferase center. This Campylobacter curvus (strain 525.92) protein is Large ribosomal subunit protein uL6.